The following is a 242-amino-acid chain: Derlin-1 (242 aa).

The Cytoplasmic segment spans residues 1 to 20 (MSSPAEYYNSLPPISKAYGT). A helical membrane pass occupies residues 21–41 (LCFFATVLCQLQILNPPFLAL). The Lumenal portion of the chain corresponds to 42 to 55 (YYPFVFKKFQIWRL). Residues 56–76 (FTSFFFLGKFSINFGIRLLMI) traverse the membrane as a helical segment. At 77–94 (ARYGVQLEKGAFEKRTAD) the chain is on the cytoplasmic side. A helical membrane pass occupies residues 95–115 (FLWMMIFGAISLLALSAIPFL). Over 116 to 157 (DIYFLGVPMVSMLLYVWSREYPNSQISMYGLVQLRSFYLPWA) the chain is Lumenal. The helical transmembrane segment at 158-178 (MLGLDVIFGSEILPGLLGILV) threads the bilayer. Topologically, residues 179–242 (GHTYYFLSVL…FRGRSYRLSQ (64 aa)) are cytoplasmic.

It belongs to the derlin family. In terms of tissue distribution, seedling shoots and roots.

It is found in the endoplasmic reticulum membrane. Its function is as follows. May be involved in the degradation process of specific misfolded endoplasmic reticulum (ER) luminal proteins. This chain is Derlin-1 (DER1), found in Oryza sativa subsp. japonica (Rice).